Consider the following 382-residue polypeptide: Plasmid replication initiator protein TrfA (382 aa).

Residues 1–163 (MNRTFDRKAY…TARSALFTTR (163 aa)) are toxic in E.coli strain K12 / DH5-alpha; may be membrane-associated. A DNA-binding region (H-T-H motif) is located at residues 246–265 (SRLQATAMGFTSDRVGHLES). The segment at 286–297 (VLIDEEIVVLFA) is hydrophobic region (HR); required for membrane association.

Forms a dimer in solution, binds DNA as a monomer. Both mononer and dimer of the short form interact with Hda (Dp).

It is found in the cell inner membrane. Functionally, required for initiation of plasmid DNA replication, along with host-derived DnaA and other host proteins. Both forms of the protein are capable of initiating plasmid replication in a number of Gram-negative bacteria. Binds to 8 17-base pair repeat sequences (iterons) in the RK2 minimal replication origin (oriV), opening the origin of replication. oriV opening does not absolutely require the presence of nucleotides; formation of open complex is somewhat enhanced by ATP or ATP gamma S, while DnaA or HU is required for full opening. Also involved in plasmid copy number control, promoting intermolecular coupling of protein bound iterons at oriV, which inhibits replication initiation. In Escherichia coli, this protein is Plasmid replication initiator protein TrfA (trfA).